We begin with the raw amino-acid sequence, 558 residues long: Protein NRT1/ PTR FAMILY 2.3 (558 aa).

12 consecutive transmembrane segments (helical) span residues 33–53 (TLLG…VFLI), 69–89 (VANG…DSFF), 92–112 (IPVI…LTLI), 128–148 (VLCT…LALV), 176–196 (FFNW…TAIV), 203–223 (SWKL…IVFV), 329–349 (LWLS…LIVL), 371–391 (VIII…VFPM), 403–423 (LQKV…SAVV), 439–459 (VLWL…QFPA), 478–498 (SLTS…IDLI), and 517–537 (VYWL…VCSW).

This sequence belongs to the major facilitator superfamily. Proton-dependent oligopeptide transporter (POT/PTR) (TC 2.A.17) family. As to expression, expressed in flowers, siliques and root epidermis or cortex. Detected in shoots.

It localises to the membrane. Transporter involved in a passive nitrate efflux. This chain is Protein NRT1/ PTR FAMILY 2.3 (NPF2.3), found in Arabidopsis thaliana (Mouse-ear cress).